Here is a 106-residue protein sequence, read N- to C-terminus: UPF0145 protein NE1032 (106 aa).

Belongs to the UPF0145 family.

This is UPF0145 protein NE1032 from Nitrosomonas europaea (strain ATCC 19718 / CIP 103999 / KCTC 2705 / NBRC 14298).